The chain runs to 410 residues: Cysteine desulfurase IscS (410 aa).

Residues 79–80 (AT), asparagine 159, glutamine 187, and 207–209 (SGH) each bind pyridoxal 5'-phosphate. An N6-(pyridoxal phosphate)lysine modification is found at lysine 210. A pyridoxal 5'-phosphate-binding site is contributed by threonine 248. The Cysteine persulfide intermediate role is filled by cysteine 334. [2Fe-2S] cluster is bound at residue cysteine 334.

This sequence belongs to the class-V pyridoxal-phosphate-dependent aminotransferase family. NifS/IscS subfamily. As to quaternary structure, homodimer. Forms a heterotetramer with IscU, interacts with other sulfur acceptors. Pyridoxal 5'-phosphate serves as cofactor.

The protein localises to the cytoplasm. The enzyme catalyses (sulfur carrier)-H + L-cysteine = (sulfur carrier)-SH + L-alanine. Its pathway is cofactor biosynthesis; iron-sulfur cluster biosynthesis. Functionally, master enzyme that delivers sulfur to a number of partners involved in Fe-S cluster assembly, tRNA modification or cofactor biosynthesis. Catalyzes the removal of elemental sulfur atoms from cysteine to produce alanine. Functions as a sulfur delivery protein for Fe-S cluster synthesis onto IscU, an Fe-S scaffold assembly protein, as well as other S acceptor proteins. The chain is Cysteine desulfurase IscS from Ehrlichia chaffeensis (strain ATCC CRL-10679 / Arkansas).